We begin with the raw amino-acid sequence, 356 residues long: Histidinol-phosphate aminotransferase (356 aa).

Lys-210 bears the N6-(pyridoxal phosphate)lysine mark.

It belongs to the class-II pyridoxal-phosphate-dependent aminotransferase family. Histidinol-phosphate aminotransferase subfamily. In terms of assembly, homodimer. Pyridoxal 5'-phosphate is required as a cofactor.

The catalysed reaction is L-histidinol phosphate + 2-oxoglutarate = 3-(imidazol-4-yl)-2-oxopropyl phosphate + L-glutamate. The protein operates within amino-acid biosynthesis; L-histidine biosynthesis; L-histidine from 5-phospho-alpha-D-ribose 1-diphosphate: step 7/9. This chain is Histidinol-phosphate aminotransferase (hisC), found in Acetobacter pasteurianus (Acetobacter turbidans).